Consider the following 160-residue polypeptide: 6,7-dimethyl-8-ribityllumazine synthase (160 aa).

5-amino-6-(D-ribitylamino)uracil is bound by residues Trp28, 59–61 (ALE), and 81–83 (CVI). 86–87 (ET) contributes to the (2S)-2-hydroxy-3-oxobutyl phosphate binding site. The Proton donor role is filled by His89. Asn114 is a 5-amino-6-(D-ribitylamino)uracil binding site. Arg128 is a (2S)-2-hydroxy-3-oxobutyl phosphate binding site.

Belongs to the DMRL synthase family.

The catalysed reaction is (2S)-2-hydroxy-3-oxobutyl phosphate + 5-amino-6-(D-ribitylamino)uracil = 6,7-dimethyl-8-(1-D-ribityl)lumazine + phosphate + 2 H2O + H(+). Its pathway is cofactor biosynthesis; riboflavin biosynthesis; riboflavin from 2-hydroxy-3-oxobutyl phosphate and 5-amino-6-(D-ribitylamino)uracil: step 1/2. In terms of biological role, catalyzes the formation of 6,7-dimethyl-8-ribityllumazine by condensation of 5-amino-6-(D-ribitylamino)uracil with 3,4-dihydroxy-2-butanone 4-phosphate. This is the penultimate step in the biosynthesis of riboflavin. In Corynebacterium jeikeium (strain K411), this protein is 6,7-dimethyl-8-ribityllumazine synthase.